Here is a 256-residue protein sequence, read N- to C-terminus: Trans-aconitate 2-methyltransferase (256 aa).

This sequence belongs to the methyltransferase superfamily. Tam family.

It is found in the cytoplasm. The catalysed reaction is trans-aconitate + S-adenosyl-L-methionine = (E)-3-(methoxycarbonyl)pent-2-enedioate + S-adenosyl-L-homocysteine. In terms of biological role, catalyzes the S-adenosylmethionine monomethyl esterification of trans-aconitate. This Rhodopseudomonas palustris (strain BisB18) protein is Trans-aconitate 2-methyltransferase.